Reading from the N-terminus, the 449-residue chain is Myb-related protein Pp1 (449 aa).

Residues 1-30 enclose the HTH myb-type domain; that stretch reads LGNRWSAIAIPRRTDNEIKNYWNTHLKKRL. A DNA-binding region (H-T-H motif) is located at residues 5–26; that stretch reads WSAIAIPRRTDNEIKNYWNTHL.

The protein localises to the nucleus. Its function is as follows. Possible transcription activator. The polypeptide is Myb-related protein Pp1 (PP1) (Physcomitrium patens (Spreading-leaved earth moss)).